The following is a 412-amino-acid chain: Phosphoglycerate kinase 1 (412 aa).

Residues 28 to 30 (DFN), 65 to 68 (HQGR), Arg-122, and Arg-162 contribute to the substrate site. Residues Glu-336 and 361–364 (GGHT) each bind ATP.

Belongs to the phosphoglycerate kinase family. As to quaternary structure, monomer.

Its subcellular location is the cytoplasm. It catalyses the reaction (2R)-3-phosphoglycerate + ATP = (2R)-3-phospho-glyceroyl phosphate + ADP. Its pathway is carbohydrate degradation; glycolysis; pyruvate from D-glyceraldehyde 3-phosphate: step 2/5. The polypeptide is Phosphoglycerate kinase 1 (Methanosarcina acetivorans (strain ATCC 35395 / DSM 2834 / JCM 12185 / C2A)).